Here is a 378-residue protein sequence, read N- to C-terminus: Phospho-N-acetylmuramoyl-pentapeptide-transferase (378 aa).

Transmembrane regions (helical) follow at residues L26–N46, L57–L77, M103–A123, L127–W147, G171–V191, W195–A215, G225–L245, P247–W267, V275–A295, L302–Y322, and I356–W376.

This sequence belongs to the glycosyltransferase 4 family. MraY subfamily. Mg(2+) serves as cofactor.

It localises to the cell inner membrane. It carries out the reaction UDP-N-acetyl-alpha-D-muramoyl-L-alanyl-gamma-D-glutamyl-meso-2,6-diaminopimeloyl-D-alanyl-D-alanine + di-trans,octa-cis-undecaprenyl phosphate = di-trans,octa-cis-undecaprenyl diphospho-N-acetyl-alpha-D-muramoyl-L-alanyl-D-glutamyl-meso-2,6-diaminopimeloyl-D-alanyl-D-alanine + UMP. It functions in the pathway cell wall biogenesis; peptidoglycan biosynthesis. Catalyzes the initial step of the lipid cycle reactions in the biosynthesis of the cell wall peptidoglycan: transfers peptidoglycan precursor phospho-MurNAc-pentapeptide from UDP-MurNAc-pentapeptide onto the lipid carrier undecaprenyl phosphate, yielding undecaprenyl-pyrophosphoryl-MurNAc-pentapeptide, known as lipid I. This chain is Phospho-N-acetylmuramoyl-pentapeptide-transferase, found in Thermosynechococcus vestitus (strain NIES-2133 / IAM M-273 / BP-1).